We begin with the raw amino-acid sequence, 105 residues long: Small ribosomal subunit protein uS10 (105 aa).

This sequence belongs to the universal ribosomal protein uS10 family. As to quaternary structure, part of the 30S ribosomal subunit.

Involved in the binding of tRNA to the ribosomes. The chain is Small ribosomal subunit protein uS10 from Roseobacter denitrificans (strain ATCC 33942 / OCh 114) (Erythrobacter sp. (strain OCh 114)).